The sequence spans 942 residues: MAVMEVACPGTPGSAVGQQKELAKAKEKTQSLGKKQSCIFKLEAVEKSPVFCGKWEILNDVITKGTAKDGSEGGPPAISIIAQAECENSQEFSPTFSERIFIAGSQQYSQSESLDQIPNNVAHATEGKMARVCRRGKRHGKARKKRRKKRSKSLAQAGVALAKPLPRTPEQESCTIPVQEDESPLGNLYARNVSQFTKPLGGPGLGHLCFKKQDEGLRPVLPRPELHKLISPLQCLNHVWKLHHPQATGPRPHPTHPFPYSGMPHPFPFYPLEPWKPYMLDSAVLDKLAGVSGQRPLPGPPHLSQLAHGDSQKPLPGPHLESSCPSRGALEKVPVEEYLVHALQGSVSSGQAHSLASLAKTWSSGSAKLQRLGPETEDNEGVLLTEKLKPVDYEYREEVHWMTHQPRVGRGSFGEVHRMKDKQTGFQCAVKKVRLEVFRVEELVACAGLSSPRIVPLYGAVREGPWVNIFMELLEGGSLGQLIKQMGCLPEDRALYYLGQALEGLEYLHTRRILHGDVKADNVLLSSDGSRAALCDFGHALCLQPDGLGKSLLTGDYIPGTETHMAPEVVMGKPCDAKVDIWSSCCMMLHMLNGCHPWTQYFRGPLCLKIASEPPPIREIPPSCAPLTAQAIQEGLRKEPVHRASAMELRRKVGKALQEVGGLKSPWKGEYKEPRPPPQDQATCHQTLPTPPRENPPAKANTDGAPEPQPPLPPEPPEPSKAPALNLSKEESGTWEPLPLSSLDPATAKGPSFPDRRATLPELELQQLEIELFLNSLSQPFSLEEQEQILSCLSIDSLSLSDDSEKNPSKASQSSRDTLSSGVHSWNSQAEARTCSCSTALARGRPTDIPSYFNGVKVQIQSLNGEHLHIREFHRVKVGDIATGISSQIPATAFSLVTKDGQPVCYDMEVPDSGIDLQCTLAPDGSFAWTWRVKHGQLENRP.

Over residues 136–152 (GKRHGKARKKRRKKRSK) the composition is skewed to basic residues. 2 disordered regions span residues 136–156 (GKRHGKARKKRRKKRSKSLAQ) and 291–326 (VSGQRPLPGPPHLSQLAHGDSQKPLPGPHLESSCPS). The Protein kinase domain occupies 402 to 657 (MTHQPRVGRG…ELRRKVGKAL (256 aa)). Residues 403 to 655 (THQPRVGRGS…AMELRRKVGK (253 aa)) are interaction with ZFP91. ATP-binding positions include 408–416 (VGRGSFGEV) and Lys-431. Asp-517 serves as the catalytic Proton acceptor. Residue Thr-561 is modified to Phosphothreonine. Disordered stretches follow at residues 660 to 756 (VGGL…FPDR) and 801 to 823 (SDDSEKNPSKASQSSRDTLSSGV). Over residues 707–720 (EPQPPLPPEPPEPS) the composition is skewed to pro residues. Residues 809–823 (SKASQSSRDTLSSGV) are compositionally biased toward polar residues.

Belongs to the protein kinase superfamily. STE Ser/Thr protein kinase family. MAP kinase kinase kinase subfamily. Interacts with TRAF2, TRAF3, TRAF5, TRAF6, IKKA and NF-kappa-B2/P100. Interacts with PELI3. Interacts with NIBP; the interaction is direct. Interacts with ARRB1 and ARRB2. Interacts with GRB10. Interacts with ZFP91. Interacts with NLRP12; this interaction promotes proteasomal degradation of MAP3K14. Directly interacts with DDX3X. Interacts (via C-terminus and kinase domain) with PPPC3A (via N-terminus) and PPP3CB. In terms of processing, phosphorylation at Thr-561 is required to activate its kinase activity and 'Lys-63'-linked polyubiquitination. Phosphorylated by CHUK/IKKA leading to MAP3K14 destabilization. Autophosphorylated. Post-translationally, ubiquitinated. Undergoes both 'Lys-48'- and 'Lys-63'-linked polyubiquitination. 'Lys-48'-linked polyubiquitination leads to its degradation by the proteasome, while 'Lys-63'-linked polyubiquitination stabilizes and activates it.

The protein localises to the cytoplasm. The catalysed reaction is L-seryl-[protein] + ATP = O-phospho-L-seryl-[protein] + ADP + H(+). It carries out the reaction L-threonyl-[protein] + ATP = O-phospho-L-threonyl-[protein] + ADP + H(+). Its function is as follows. Lymphotoxin beta-activated kinase which seems to be exclusively involved in the activation of NF-kappa-B and its transcriptional activity. Phosphorylates CHUK/IKKA. Promotes proteolytic processing of NFKB2/P100, which leads to activation of NF-kappa-B via the non-canonical pathway. Has an essential role in the non-canonical NF-kappa-B signalining that regulates genes encoding molecules involved in B-cell survival, lymphoid organogenesis, and immune response. Could act in a receptor-selective manner. The sequence is that of Mitogen-activated protein kinase kinase kinase 14 from Mus musculus (Mouse).